Here is a 295-residue protein sequence, read N- to C-terminus: Light-independent protochlorophyllide reductase iron-sulfur ATP-binding protein (295 aa).

ATP-binding positions include 39–44 (GIGKST) and lysine 68. Serine 43 is a binding site for Mg(2+). [4Fe-4S] cluster contacts are provided by cysteine 124 and cysteine 158. An ATP-binding site is contributed by 209–210 (NR).

Belongs to the NifH/BchL/ChlL family. Homodimer. Protochlorophyllide reductase is composed of three subunits; ChlL, ChlN and ChlB. [4Fe-4S] cluster is required as a cofactor.

The catalysed reaction is chlorophyllide a + oxidized 2[4Fe-4S]-[ferredoxin] + 2 ADP + 2 phosphate = protochlorophyllide a + reduced 2[4Fe-4S]-[ferredoxin] + 2 ATP + 2 H2O. It functions in the pathway porphyrin-containing compound metabolism; chlorophyll biosynthesis (light-independent). In terms of biological role, component of the dark-operative protochlorophyllide reductase (DPOR) that uses Mg-ATP and reduced ferredoxin to reduce ring D of protochlorophyllide (Pchlide) to form chlorophyllide a (Chlide). This reaction is light-independent. The L component serves as a unique electron donor to the NB-component of the complex, and binds Mg-ATP. This Prochlorococcus marinus (strain AS9601) protein is Light-independent protochlorophyllide reductase iron-sulfur ATP-binding protein.